Here is a 30-residue protein sequence, read N- to C-terminus: Bacteriocin SRCAM 37 (30 aa).

It belongs to the bacteriocin class IIA/YGNGV family.

It localises to the secreted. Bacteriocin with antibacterial activity against C.jejuni. The polypeptide is Bacteriocin SRCAM 37 (Paenibacillus polymyxa (Bacillus polymyxa)).